The primary structure comprises 235 residues: Putative cobalt transport protein CbiM 2 (235 aa).

7 helical membrane-spanning segments follow: residues 8–28 (LPAIWCIVWFVVSIPVVAYGV), 40–60 (GILPVLAVAGAFIFVLSSLKM), 74–94 (GIGAIIFGPAITAVLSTIVLI), 107–127 (TLGANVFSMGIVGPIVAYLIY), 135–155 (LNFYLIVFLAATLGDWATYIV), 160–180 (LALAFPAGDILTFGGFFSSFS), and 185–205 (IFAITQVPLAIVEGAVSALLF).

It belongs to the CbiM family. Forms an energy-coupling factor (ECF) transporter complex composed of an ATP-binding protein (A component, CbiO), a transmembrane protein (T component, CbiQ) and 2 possible substrate-capture proteins (S components, CbiM and CbiN) of unknown stoichimetry.

The protein resides in the cell membrane. It functions in the pathway cofactor biosynthesis; adenosylcobalamin biosynthesis. In terms of biological role, part of the energy-coupling factor (ECF) transporter complex CbiMNOQ involved in cobalt import. This Methanosarcina barkeri (strain Fusaro / DSM 804) protein is Putative cobalt transport protein CbiM 2.